A 763-amino-acid chain; its full sequence is Serine/threonine-protein kinase PknG (763 aa).

The tract at residues 1-32 (MKREHMDHDTEDVGQAAQRADPPSGTTEGRLQ) is disordered. In terms of domain architecture, Protein kinase spans 160–406 (YEVKGCIAHG…SAEEMSAQLM (247 aa)). ATP-binding positions include 166 to 174 (IAHGGLGWV) and Lys-190. Asp-289 serves as the catalytic Proton acceptor.

Belongs to the protein kinase superfamily. Ser/Thr protein kinase family. In terms of processing, autophosphorylated.

It catalyses the reaction L-seryl-[protein] + ATP = O-phospho-L-seryl-[protein] + ADP + H(+). It carries out the reaction L-threonyl-[protein] + ATP = O-phospho-L-threonyl-[protein] + ADP + H(+). This Mycobacterium leprae (strain TN) protein is Serine/threonine-protein kinase PknG (pknG).